Reading from the N-terminus, the 95-residue chain is Sec-independent protein translocase protein TatA (95 aa).

A helical membrane pass occupies residues 1 to 21; it reads MGGISIWQLLIIALIVVLLFG. The segment covering 50–61 has biased composition (basic and acidic residues); sequence KALEDNAADKPA. Positions 50 to 95 are disordered; it reads KALEDNAADKPAADAAKVTETAKVAETAPVAETAEKKAESKGKEQA. Low complexity predominate over residues 62 to 81; the sequence is ADAAKVTETAKVAETAPVAE. Basic and acidic residues predominate over residues 82-95; it reads TAEKKAESKGKEQA.

Belongs to the TatA/E family. The Tat system comprises two distinct complexes: a TatABC complex, containing multiple copies of TatA, TatB and TatC subunits, and a separate TatA complex, containing only TatA subunits. Substrates initially bind to the TatABC complex, which probably triggers association of the separate TatA complex to form the active translocon.

The protein resides in the cell inner membrane. Part of the twin-arginine translocation (Tat) system that transports large folded proteins containing a characteristic twin-arginine motif in their signal peptide across membranes. TatA could form the protein-conducting channel of the Tat system. The sequence is that of Sec-independent protein translocase protein TatA from Shewanella halifaxensis (strain HAW-EB4).